A 201-amino-acid chain; its full sequence is Small ribosomal subunit protein uS4c (201 aa).

Positions 15-43 are disordered; the sequence is LGALPGLTSKRPRPGSDLRNQSRSGKRSQ. The region spanning 89-150 is the S4 RNA-binding domain; sequence MRLDNILFRL…EQRSRALIQN (62 aa).

Belongs to the universal ribosomal protein uS4 family. In terms of assembly, part of the 30S ribosomal subunit. Contacts protein S5. The interaction surface between S4 and S5 is involved in control of translational fidelity.

The protein localises to the plastid. The protein resides in the chloroplast. Functionally, one of the primary rRNA binding proteins, it binds directly to 16S rRNA where it nucleates assembly of the body of the 30S subunit. Its function is as follows. With S5 and S12 plays an important role in translational accuracy. The sequence is that of Small ribosomal subunit protein uS4c (rps4) from Liriodendron tulipifera (Tuliptree).